Consider the following 133-residue polypeptide: Profilin (133 aa).

This sequence belongs to the profilin family.

Its function is as follows. More likely to influence phosphoinositide metabolism than actin assembly. The chain is Profilin from Cowpox virus (strain GRI-90 / Grishak) (CPV).